We begin with the raw amino-acid sequence, 122 residues long: Large ribosomal subunit protein bL12 (122 aa).

The protein belongs to the bacterial ribosomal protein bL12 family. As to quaternary structure, homodimer. Part of the ribosomal stalk of the 50S ribosomal subunit. Forms a multimeric L10(L12)X complex, where L10 forms an elongated spine to which 2 to 4 L12 dimers bind in a sequential fashion. Binds GTP-bound translation factors.

In terms of biological role, forms part of the ribosomal stalk which helps the ribosome interact with GTP-bound translation factors. Is thus essential for accurate translation. This chain is Large ribosomal subunit protein bL12, found in Latilactobacillus sakei subsp. sakei (strain 23K) (Lactobacillus sakei subsp. sakei).